A 689-amino-acid chain; its full sequence is MTQQTFLVEIGTEELPPKALRSLAEAFAANFAAELDNANLAYGEISWFATPRRLALKVANLDEAQADREVEKRGPAIAQAFDTEGKPTKAAEGWARGCGITAAQAERLVTDKGEWLLYRALVKGRSVKELLAAMVNSALNKLPIPKLMRWSDKETQFARPVHTVTMLFGDELIEGEILGIKSARVIRGHRFMGESEFAIDNAEQYPEILQQRGRVLADYTTRKVLIKQDVEQAAIKLGGVADISDSLLEEVTSLVEWPVVLTAKFEEKFLEVPAEALVYTMKGDQKYFPVYDNAGKLMANFIFVANIDSSDPQQIIDGNEKVVRPRLADAEFFFKTDRKQRLEDNLPRLETVLFQKQLGTLRDKTDRIQALAGWIAEKIGADVNHATRAGLLSKCDLMTNMVFEFTDTQGVMGMHYARHDGEAEDVALALNEQYQPRFAGDELPSTGVSCALAIADKMDTLAGIFGIGQHPRGDKDPFALRRAALGALRIIVEKKLPLDLQTLTEEAVRLYGDKLTNAKVTDDVVEFMLGRFRAWYQEQGYRVDTIQAVLARRPTQPADFDARVKAVTHFRTLDEAAALAAANKRVSNILAKSEETLNEKVDVSTLKAPEEVKLATHLIVLQDKLAPLFAEGHYQEALVELASLREVVDAFFDNVMVMDEDLQVRVNRLTLLSELRDLFLRVADISLLQ.

The protein belongs to the class-II aminoacyl-tRNA synthetase family. As to quaternary structure, tetramer of two alpha and two beta subunits.

The protein localises to the cytoplasm. The catalysed reaction is tRNA(Gly) + glycine + ATP = glycyl-tRNA(Gly) + AMP + diphosphate. The polypeptide is Glycine--tRNA ligase beta subunit (Photorhabdus laumondii subsp. laumondii (strain DSM 15139 / CIP 105565 / TT01) (Photorhabdus luminescens subsp. laumondii)).